The primary structure comprises 586 residues: MFLQLFNIVLIYGVRTSQSTWINYPENCTSISLQDGLRELCGGDQLMNIRNQLLDDTYKEIGEICTPNYSMEKKSEGYRCASIKKKVICKMLENFDHEVTYISESHPIDKAKCHELIINKDLLNNIEEPYYPPPKCDSSKSSVSELEFIKLINYDVILDPVGFQNEDNYLFQFDKTNPIPIDYIYQSEFCQSKNWICHGDKSYIPLEIFKGDNQASIRLELIKLSIIYDSNFGELPIRDACRLHYCGKPAIKLFNGAIIKIKESPIVLGLPSCNRSRIEMPETNLAKKRYSNVGPVLLTTLNKRFELCKKIKKNLELKQPIPINNLHYLAPFEPGKHPALVYRLVSTTINQSLRNKVVPVSMLSMSMCEYITGQIIEDGIKRNLTDEDTVIILANNKEIKWKDLKGRENWYQEQANPNIIDKNPDHLSYYWYNGVMRREDKFTYPSRYILQTLKKIYTDTERESRISFFKFRLERNITKTEVIKFRDIEESSDQDHSQSVNKTLEGDDYWNWVEETTSDKNKTDGSRGDEKQTIQNKEYWNEESSIWGISTIITVLGIYYIYRKNRREKIFLNMKHRVQRFFKLDY.

Residues 1–14 (MFLQLFNIVLIYGV) form the signal peptide. Topologically, residues 15 to 544 (RTSQSTWINY…QNKEYWNEES (530 aa)) are extracellular. Residues N27, N68, N274, N350, N383, N476, N501, and N521 are each glycosylated (N-linked (GlcNAc...) asparagine; by host). The helical transmembrane segment at 545–562 (SIWGISTIITVLGIYYIY) threads the bilayer. The Cytoplasmic portion of the chain corresponds to 563–586 (RKNRREKIFLNMKHRVQRFFKLDY).

Belongs to the ephemerovirus glycoprotein family.

It localises to the host membrane. This Bos taurus (Bovine) protein is Non-structural glycoprotein GNS (GNS).